The primary structure comprises 299 residues: Sulfate adenylyltransferase subunit 2 (299 aa).

The protein belongs to the PAPS reductase family. CysD subfamily. As to quaternary structure, sulfate-activating enzymes, NodP and NodQ, may be physically associated.

The catalysed reaction is sulfate + ATP + H(+) = adenosine 5'-phosphosulfate + diphosphate. Its function is as follows. Proposed to provide activated sulfate for transfer to nod factor. This is Sulfate adenylyltransferase subunit 2 (nodP) from Rhizobium tropici.